We begin with the raw amino-acid sequence, 273 residues long: Nickel permease LarQ (273 aa).

5 helical membrane passes run 64 to 84 (LIQL…ILLW), 117 to 137 (MLFV…FFGL), 159 to 179 (LAGL…AIAI), 210 to 230 (LIGA…LELY), and 251 to 271 (HWRD…FIFW).

Belongs to the CbiQ family. In terms of assembly, may form an energy-coupling factor (ECF) transporter complex composed of an ATP-binding protein (A component, LarO), a transmembrane protein (T component, LarQ) and a fused possible substrate-capture protein (S component, LarMN) of unknown stoichiometry.

The protein resides in the cell membrane. Its function is as follows. Probable transmembrane component of the energy-coupling factor (ECF) transporter complex LarMNQO involved in nickel import. The polypeptide is Nickel permease LarQ (Lactiplantibacillus plantarum (strain ATCC BAA-793 / NCIMB 8826 / WCFS1) (Lactobacillus plantarum)).